The chain runs to 578 residues: Arginine--tRNA ligase (578 aa).

The short motif at 127–137 is the 'HIGH' region element; sequence PNLAKEMHVGH.

This sequence belongs to the class-I aminoacyl-tRNA synthetase family. In terms of assembly, monomer.

Its subcellular location is the cytoplasm. It catalyses the reaction tRNA(Arg) + L-arginine + ATP = L-arginyl-tRNA(Arg) + AMP + diphosphate. The polypeptide is Arginine--tRNA ligase (Pseudomonas fluorescens (strain ATCC BAA-477 / NRRL B-23932 / Pf-5)).